A 351-amino-acid polypeptide reads, in one-letter code: UPF0764 protein C16orf89 homolog (351 aa).

The signal sequence occupies residues 1-25 (MKSLKMLYPLFMLLVLSSKIDLSNQ).

Belongs to the UPF0764 family. As to quaternary structure, homodimer.

It localises to the secreted. The protein is UPF0764 protein C16orf89 homolog of Danio rerio (Zebrafish).